Reading from the N-terminus, the 200-residue chain is Large ribosomal subunit protein uL4 (200 aa).

Positions Gly38–Arg73 are disordered.

This sequence belongs to the universal ribosomal protein uL4 family. Part of the 50S ribosomal subunit.

In terms of biological role, one of the primary rRNA binding proteins, this protein initially binds near the 5'-end of the 23S rRNA. It is important during the early stages of 50S assembly. It makes multiple contacts with different domains of the 23S rRNA in the assembled 50S subunit and ribosome. Functionally, forms part of the polypeptide exit tunnel. The protein is Large ribosomal subunit protein uL4 of Ectopseudomonas mendocina (strain ymp) (Pseudomonas mendocina).